A 145-amino-acid chain; its full sequence is Hemoglobin subunit beta (145 aa).

One can recognise a Globin domain in the interval 1 to 145 (MLTAEEKAAV…VANALAHRYH (145 aa)). Phosphothreonine is present on T11. The residue at position 58 (K58) is an N6-acetyllysine. H62 contributes to the heme b binding site. N6-acetyllysine is present on K81. Residue H91 participates in heme b binding. Position 92 is an S-nitrosocysteine (C92).

This sequence belongs to the globin family. As to quaternary structure, heterotetramer of two alpha chains and two beta chains. As to expression, red blood cells.

Functionally, involved in oxygen transport from the lung to the various peripheral tissues. The chain is Hemoglobin subunit beta (HBB) from Ovis aries musimon (Mouflon).